A 511-amino-acid polypeptide reads, in one-letter code: Limonoid UDP-glucosyltransferase (511 aa).

The Proton acceptor role is filled by H19. H19 contacts an anthocyanidin. UDP-alpha-D-glucose-binding residues include Q344, H359, W362, N363, S364, and E367. An anthocyanidin is bound at residue G382. Residues D383 and Q384 each contribute to the UDP-alpha-D-glucose site.

This sequence belongs to the UDP-glycosyltransferase family.

The enzyme catalyses limonin + UDP-alpha-D-glucose + H2O = limonin 17-beta-D-glucoside + UDP + 2 H(+). Involved in the glucosylation of limonoids. This Citrus unshiu (Satsuma mandarin) protein is Limonoid UDP-glucosyltransferase.